The sequence spans 109 residues: Ribonuclease P protein component (109 aa).

This sequence belongs to the RnpA family. In terms of assembly, consists of a catalytic RNA component (M1 or rnpB) and a protein subunit.

It carries out the reaction Endonucleolytic cleavage of RNA, removing 5'-extranucleotides from tRNA precursor.. Its function is as follows. RNaseP catalyzes the removal of the 5'-leader sequence from pre-tRNA to produce the mature 5'-terminus. It can also cleave other RNA substrates such as 4.5S RNA. The protein component plays an auxiliary but essential role in vivo by binding to the 5'-leader sequence and broadening the substrate specificity of the ribozyme. The chain is Ribonuclease P protein component from Mycoplasma capricolum subsp. capricolum (strain California kid / ATCC 27343 / NCTC 10154).